The sequence spans 499 residues: Chitinase B (499 aa).

The N-terminal stretch at 1–41 (MSTRKAVIGYYFIPTNQINNYTETDTSVVPFPVSNITPAKA) is a signal peptide. One can recognise a GH18 domain in the interval 42 to 425 (KQLTHINFSF…AALDRYFNAA (384 aa)). Chitin-binding positions include 68–69 (DA) and 95–98 (GGWY). Glutamate 144 acts as the Proton donor in catalysis. Residues tyrosine 145, 212–215 (MTYD), and tryptophan 403 contribute to the chitin site. Positions 438–498 (LRYTGVGPGN…DSAWLKVGRL (61 aa)) constitute a Chitin-binding type-3 domain.

Belongs to the glycosyl hydrolase 18 family. Chitinase class II subfamily.

It carries out the reaction Random endo-hydrolysis of N-acetyl-beta-D-glucosaminide (1-&gt;4)-beta-linkages in chitin and chitodextrins.. This chain is Chitinase B (chiB), found in Serratia marcescens.